A 656-amino-acid chain; its full sequence is Leucine-rich repeat-containing protein 43 (656 aa).

Acidic residues predominate over residues methionine 1–serine 13. A disordered region spans residues methionine 1–glycine 25. LRR repeat units lie at residues lysine 150 to proline 170, threonine 172 to proline 193, glycine 196 to tyrosine 215, and asparagine 223 to leucine 244. The LRRCT domain occupies asparagine 258–leucine 296. Positions leucine 512–glutamate 554 are disordered. A compositionally biased stretch (basic and acidic residues) spans glycine 517–valine 544.

The sequence is that of Leucine-rich repeat-containing protein 43 (LRRC43) from Homo sapiens (Human).